Here is a 962-residue protein sequence, read N- to C-terminus: Splicing regulator ARVCF (962 aa).

Residues 11-46 (SILASVKEQEARFERLTRALEQERRHVALQLERAQQ) are a coiled coil. A disordered region spans residues 95 to 123 (VTVEEDPGTPTSHVSIVTSEDGTTRRTET). Residues Thr-103 and Thr-105 each carry the phosphothreonine modification. The span at 103-115 (TPTSHVSIVTSED) shows a compositional bias: polar residues. At Arg-171 the chain carries Omega-N-methylarginine. Disordered regions lie at residues 233-255 (GRRE…LPEH), 268-291 (RSLA…TRRR), and 322-357 (AATA…EPRW). Ser-269 is modified (phosphoserine). The segment covering 272–282 (ADDEGGPDLEP) has biased composition (acidic residues). Phosphoserine is present on residues Ser-334, Ser-337, Ser-345, and Ser-347. 6 ARM repeats span residues 350 to 389 (STRK…HLCF), 392 to 431 (EGIK…NLSY), 435 to 469 (TDNK…VTGT), 470 to 510 (LWNL…NEDS), 528 to 567 (LRNV…DTDN), and 577 to 623 (MRNL…GKKA). Residues 593-618 (RYQEAEPGIPGSTTSQRRRKDDASCF) form a disordered region. The residue at position 607 (Ser-607) is a Phosphoserine. Residues 608–624 (QRRRKDDASCFGGKKAK) carry the Nuclear localization signal motif. Residue Thr-643 is modified to Phosphothreonine. ARM repeat units lie at residues 647-687 (PKRT…AAGA), 700-739 (TYIR…NLSL), 740-782 (DQRN…AVLN), and 783-827 (TIHE…SHVL). The required for interaction with RNA-binding proteins DDX5, HNRNPH2 and SRSF1 and with mRNAs stretch occupies residues 777–962 (VVAVLNTIHE…TKPQPVDSWV (186 aa)). The disordered stretch occupies residues 844–962 (GWTKSRFQSA…TKPQPVDSWV (119 aa)). Ser-864 and Ser-871 each carry phosphoserine. Thr-872 is subject to Phosphothreonine. Basic and acidic residues-rich tracts occupy residues 878 to 887 (KSLDGEKSNT) and 920 to 932 (TSEK…DPGR).

The protein belongs to the beta-catenin family. As to quaternary structure, component of a ribonucleoprotein complex containing mRNAs and RNA-binding proteins including DDX5, HNRNPH2 and SRSF1 as well as ARVCF. Interacts (via the extreme C-terminus) with FRMPD2 (via the PDZ 2 domain). Interacts with CCDC85B.

Its subcellular location is the cell junction. It localises to the adherens junction. The protein resides in the nucleus. The protein localises to the cytoplasm. Contributes to the regulation of alternative splicing of pre-mRNAs. The sequence is that of Splicing regulator ARVCF (Arvcf) from Mus musculus (Mouse).